A 138-amino-acid chain; its full sequence is Ribonuclease VapC21 (138 aa).

Residues 6 to 128 form the PINc domain; sequence LLDKSAAYRA…ERIAAITRQP (123 aa). Mg(2+) contacts are provided by Asp-8 and Asp-97.

It belongs to the PINc/VapC protein family. The cofactor is Mg(2+).

Its function is as follows. Toxic component of a type II toxin-antitoxin (TA) system. An RNase. Its toxic effect is neutralized by coexpression with cognate antitoxin VapB21. The polypeptide is Ribonuclease VapC21 (Mycobacterium tuberculosis (strain CDC 1551 / Oshkosh)).